The chain runs to 1523 residues: uncharacterized protein (1523 aa).

A disordered region spans residues 1–89; sequence MLPTSSNNEE…GSSNMNPYDR (89 aa). Residue 993–1000 coordinates ATP; that stretch reads SPFGCGKS. Polar residues-rich tracts occupy residues 1463–1476 and 1485–1498; these read TSRQ…NEYN and QSNN…SVTN. The tract at residues 1463–1498 is disordered; that stretch reads TSRQSKQQRANEYNSQHKHVKRQSNNDYGSQRSVTN.

It belongs to the DNA2/NAM7 helicase family.

This is an uncharacterized protein from Caenorhabditis elegans.